Reading from the N-terminus, the 354-residue chain is UDP-3-O-acylglucosamine N-acyltransferase (354 aa).

His258 functions as the Proton acceptor in the catalytic mechanism.

It belongs to the transferase hexapeptide repeat family. LpxD subfamily. As to quaternary structure, homotrimer.

The catalysed reaction is a UDP-3-O-[(3R)-3-hydroxyacyl]-alpha-D-glucosamine + a (3R)-hydroxyacyl-[ACP] = a UDP-2-N,3-O-bis[(3R)-3-hydroxyacyl]-alpha-D-glucosamine + holo-[ACP] + H(+). Its pathway is bacterial outer membrane biogenesis; LPS lipid A biosynthesis. In terms of biological role, catalyzes the N-acylation of UDP-3-O-acylglucosamine using 3-hydroxyacyl-ACP as the acyl donor. Is involved in the biosynthesis of lipid A, a phosphorylated glycolipid that anchors the lipopolysaccharide to the outer membrane of the cell. This is UDP-3-O-acylglucosamine N-acyltransferase from Sinorhizobium medicae (strain WSM419) (Ensifer medicae).